The sequence spans 443 residues: Protein translocase subunit SecY (443 aa).

The next 10 helical transmembrane spans lie at 24–44 (LFVI…IPGI), 77–97 (IFAL…LLTV), 125–145 (LVLA…MPGM), 154–174 (FAFY…LMWL), 183–203 (IGNG…PPAI), 217–237 (FLVL…VVFV), 274–294 (VIPA…ASWF), 317–337 (YVLL…ALVF), 370–390 (MTRL…IPEF), and 397–417 (VPFY…MDFM).

The protein belongs to the SecY/SEC61-alpha family. In terms of assembly, component of the Sec protein translocase complex. Heterotrimer consisting of SecY, SecE and SecG subunits. The heterotrimers can form oligomers, although 1 heterotrimer is thought to be able to translocate proteins. Interacts with the ribosome. Interacts with SecDF, and other proteins may be involved. Interacts with SecA.

It is found in the cell inner membrane. The central subunit of the protein translocation channel SecYEG. Consists of two halves formed by TMs 1-5 and 6-10. These two domains form a lateral gate at the front which open onto the bilayer between TMs 2 and 7, and are clamped together by SecE at the back. The channel is closed by both a pore ring composed of hydrophobic SecY resides and a short helix (helix 2A) on the extracellular side of the membrane which forms a plug. The plug probably moves laterally to allow the channel to open. The ring and the pore may move independently. The protein is Protein translocase subunit SecY of Escherichia coli O157:H7.